The following is a 68-amino-acid chain: Small ribosomal subunit protein bS21 (68 aa).

Positions 39 to 68 (PPSVKRVRKKQESERRHRKERAMRRRMMEE) are disordered. Over residues 54–68 (RHRKERAMRRRMMEE) the composition is skewed to basic residues.

It belongs to the bacterial ribosomal protein bS21 family.

The protein is Small ribosomal subunit protein bS21 of Orientia tsutsugamushi (strain Boryong) (Rickettsia tsutsugamushi).